A 196-amino-acid polypeptide reads, in one-letter code: Large ribosomal subunit protein eL15 (196 aa).

Residues 69 to 98 (RKGGSRKQRHKAGRRSKRQGVNRLSRRKSI) are compositionally biased toward basic residues. 2 disordered regions span residues 69 to 100 (RKGGSRKQRHKAGRRSKRQGVNRLSRRKSIQR) and 161 to 196 (FRGLTSAGTKGRGQRTRGTGTEKTRPSVTGNDRQGK). Residues 186–196 (PSVTGNDRQGK) are compositionally biased toward polar residues.

The protein belongs to the eukaryotic ribosomal protein eL15 family.

This Halorubrum lacusprofundi (strain ATCC 49239 / DSM 5036 / JCM 8891 / ACAM 34) protein is Large ribosomal subunit protein eL15.